We begin with the raw amino-acid sequence, 945 residues long: 26S proteasome regulatory subunit RPN2 (945 aa).

Residue S2 is modified to N-acetylserine. PC repeat units follow at residues 366 to 399 (TATASLGVIHKGNLLEGKKVMAPYLPGSRASSRF), 403 to 440 (GSLYGLGLIYAGFGRDTTDYLKNIIVENSGTSGDEDVD), 445 to 479 (GASLGIGLAAMGSANIEVYEALKEVLYNDSATSGE), 480 to 514 (AAALGMGLCMLGTGKPEAIHDMFTYSQETQHGNIT), 516 to 549 (GLAVGLALINYGRQELADDLITKMLASDESLLRY), 550 to 585 (GGAFTIALAYAGTGNNSAVKRLLHVAVSDSNDDVRR), 586 to 618 (AAVIALGFVLLRDYTTVPRIVQLLSKSHNAHVR), 620 to 654 (GTAFALGIACAGKGLQSAIDVLDPLTKDPVDFVRQ), 655 to 692 (AAMIALSMILIQQTEKLNPQVADINKNFLSVITNKHQE), and 698 to 734 (GACVAQGIMNAGGRNVTIQLENADTGTLDTKSVVGLV). The residue at position 801 (T801) is a Phosphothreonine. The span at 810-819 (AKARAKKTKK) shows a compositional bias: basic residues. A disordered region spans residues 810 to 851 (AKARAKKTKKEKGPNEEEKKKEHEEKEKERETNKKGIKETKE). The segment covering 820–851 (EKGPNEEEKKKEHEEKEKERETNKKGIKETKE) has biased composition (basic and acidic residues). Phosphothreonine is present on T932.

It belongs to the proteasome subunit S1 family. Interacts with UBR1. Post-translationally, N-acetylated by NAT1.

In terms of biological role, acts as a regulatory subunit of the 26S proteasome which is involved in the ATP-dependent degradation of ubiquitinated proteins. This is 26S proteasome regulatory subunit RPN2 (RPN2) from Saccharomyces cerevisiae (strain ATCC 204508 / S288c) (Baker's yeast).